The chain runs to 224 residues: LexA repressor (224 aa).

The segment at residues 41-61 (MREIGDAVGLSSLSSVTHQLN) is a DNA-binding region (H-T-H motif). Residues serine 148 and lysine 185 each act as for autocatalytic cleavage activity in the active site.

This sequence belongs to the peptidase S24 family. As to quaternary structure, homodimer.

It carries out the reaction Hydrolysis of Ala-|-Gly bond in repressor LexA.. In terms of biological role, represses a number of genes involved in the response to DNA damage (SOS response), including recA and lexA. In the presence of single-stranded DNA, RecA interacts with LexA causing an autocatalytic cleavage which disrupts the DNA-binding part of LexA, leading to derepression of the SOS regulon and eventually DNA repair. The protein is LexA repressor of Leifsonia xyli subsp. xyli (strain CTCB07).